Consider the following 148-residue polypeptide: UPF0756 membrane protein ETA_17460 (148 aa).

4 consecutive transmembrane segments (helical) span residues 14–34, 51–71, 80–100, and 112–132; these read ALSY…LIVI, MTVG…SGTI, FLHW…WLGG, and VVGG…GVPV.

It belongs to the UPF0756 family.

Its subcellular location is the cell membrane. In Erwinia tasmaniensis (strain DSM 17950 / CFBP 7177 / CIP 109463 / NCPPB 4357 / Et1/99), this protein is UPF0756 membrane protein ETA_17460.